Consider the following 581-residue polypeptide: Arginine--tRNA ligase (581 aa).

Residues P126–H136 carry the 'HIGH' region motif.

Belongs to the class-I aminoacyl-tRNA synthetase family. In terms of assembly, monomer.

It is found in the cytoplasm. The enzyme catalyses tRNA(Arg) + L-arginine + ATP = L-arginyl-tRNA(Arg) + AMP + diphosphate. The polypeptide is Arginine--tRNA ligase (Shewanella woodyi (strain ATCC 51908 / MS32)).